Reading from the N-terminus, the 356-residue chain is UDP-N-acetylglucosamine--N-acetylmuramyl-(pentapeptide) pyrophosphoryl-undecaprenol N-acetylglucosamine transferase (356 aa).

UDP-N-acetyl-alpha-D-glucosamine-binding positions include 12–14 (TGG), Asn124, Arg163, Ser188, Ile242, 261–266 (ALTVSE), and Gln287.

This sequence belongs to the glycosyltransferase 28 family. MurG subfamily.

The protein localises to the cell inner membrane. It catalyses the reaction di-trans,octa-cis-undecaprenyl diphospho-N-acetyl-alpha-D-muramoyl-L-alanyl-D-glutamyl-meso-2,6-diaminopimeloyl-D-alanyl-D-alanine + UDP-N-acetyl-alpha-D-glucosamine = di-trans,octa-cis-undecaprenyl diphospho-[N-acetyl-alpha-D-glucosaminyl-(1-&gt;4)]-N-acetyl-alpha-D-muramoyl-L-alanyl-D-glutamyl-meso-2,6-diaminopimeloyl-D-alanyl-D-alanine + UDP + H(+). It participates in cell wall biogenesis; peptidoglycan biosynthesis. Its function is as follows. Cell wall formation. Catalyzes the transfer of a GlcNAc subunit on undecaprenyl-pyrophosphoryl-MurNAc-pentapeptide (lipid intermediate I) to form undecaprenyl-pyrophosphoryl-MurNAc-(pentapeptide)GlcNAc (lipid intermediate II). The polypeptide is UDP-N-acetylglucosamine--N-acetylmuramyl-(pentapeptide) pyrophosphoryl-undecaprenol N-acetylglucosamine transferase (Pseudomonas fluorescens (strain ATCC BAA-477 / NRRL B-23932 / Pf-5)).